The primary structure comprises 385 residues: Deoxyguanosinetriphosphate triphosphohydrolase-like protein (385 aa).

The segment covering 1-14 (MTEGVEGRSQERSD) has biased composition (basic and acidic residues). Positions 1 to 23 (MTEGVEGRSQERSDLAGFAARSA) are disordered. Positions 75–204 (RLTHSLEVAQ…INYADEIAYN (130 aa)) constitute an HD domain.

It belongs to the dGTPase family. Type 2 subfamily.

This chain is Deoxyguanosinetriphosphate triphosphohydrolase-like protein, found in Geobacter metallireducens (strain ATCC 53774 / DSM 7210 / GS-15).